A 144-amino-acid chain; its full sequence is Phosphomevalonate dehydratase small subunit (144 aa).

The active-site Proton acceptor is the S65.

It belongs to the AcnX type II small subunit family. As to quaternary structure, heterodimer composed of a large subunit (PMDh-L) and a small subunit (PMDh-S).

It catalyses the reaction (R)-5-phosphomevalonate = (2E)-3-methyl-5-phosphooxypent-2-enoate + H2O. The protein operates within isoprenoid biosynthesis; isopentenyl diphosphate biosynthesis via mevalonate pathway. Functionally, component of a hydro-lyase that catalyzes the dehydration of mevalonate 5-phosphate (MVA5P) to form trans-anhydromevalonate 5-phosphate (tAHMP). Involved in the archaeal mevalonate (MVA) pathway, which provides fundamental precursors for isoprenoid biosynthesis, such as isopentenyl diphosphate (IPP) and dimethylallyl diphosphate (DMAPP). The protein is Phosphomevalonate dehydratase small subunit of Methanosarcina acetivorans (strain ATCC 35395 / DSM 2834 / JCM 12185 / C2A).